A 525-amino-acid polypeptide reads, in one-letter code: Cytochrome P450 monooxygenase ltmJ (525 aa).

A helical transmembrane segment spans residues 21 to 43 (LTWWQTIVSFIIFCIMCSWLPGN). A glycan (N-linked (GlcNAc...) asparagine) is linked at N136. C465 is a heme binding site.

It belongs to the cytochrome P450 family. Requires heme as cofactor.

Its subcellular location is the membrane. The protein operates within secondary metabolite biosynthesis. Cytochrome P450 monooxygenase; part of the gene clusters that mediates the biosynthesis of lolitrems, indole-diterpene mycotoxins that are potent tremorgens in mammals, and are synthesized by clavicipitaceous fungal endophytes in association with their grass hosts. The geranylgeranyl diphosphate (GGPP) synthase ltmG is proposed to catalyze the first step in lolitrem biosynthesis. LtmG catalyzes a series of iterative condensations of isopentenyl diphosphate (IPP) with dimethylallyl diphosphate (DMAPP), geranyl diphosphate (GPP), and farnesyl diphosphate (FPP), to form GGPP. GGPP then condenses with indole-3-glycerol phosphate to form 3-geranylgeranylindole, an acyclic intermediate, to be incorporated into paxilline. Either ltmG or ltmC could be responsible for this step, as both are putative prenyl transferases. The FAD-dependent monooxygenase ltmM then catalyzes the epoxidation of the two terminal alkenes of the geranylgeranyl moiety, which is subsequently cyclized by ltmB, to paspaline. The cytochrome P450 monooxygenases ltmQ and ltmP can sequentially oxidize paspaline to terpendole E and terpendole F. Alternatively, ltmP converts paspaline to an intermediate which is oxidized by ltmQ to terpendole F. LtmF, ltmK, ltmE and ltmJ appear to be unique to the epichloe endophytes. The prenyltransferase ltmF is involved in the 27-hydroxyl-O-prenylation. The cytochrome P450 monooxygenase ltmK is required for the oxidative acetal ring formation. The multi-functional prenyltransferase ltmE is required for C20- and C21-prenylations of the indole ring of paspalanes and acts together with the cytochrome P450 monooxygenase ltmJ to yield lolitremanes by multiple oxidations and ring closures. The stereoisomer pairs of lolitriol and lolitrem N or lolitrem B and lolitrem F may be attributed to variations in the way in which ring closure can occur under the action of ltmJ. While the major product of this pathway is lolitrem B, the prenyl transferases and cytochrome P450 monooxygenases identified in this pathway have a remarkable versatility in their regio- and stereo-specificities to generate a diverse range of metabolites that are products of a metabolic grid rather than a linear pathway. This Epichloe festucae var. lolii (Neotyphodium lolii) protein is Cytochrome P450 monooxygenase ltmJ (ltmJ).